A 700-amino-acid chain; its full sequence is Sex comb on midleg-like protein 2 (700 aa).

The interval 1–33 (MGQTVNEDSMDVKKENQEKTPQSSTSSVQRDDF) is disordered. Residues 19 to 28 (KTPQSSTSSV) are compositionally biased toward polar residues. 2 MBT repeats span residues 33–131 (FHWE…LQPP) and 139–240 (SSWP…LQPP). Over residues 253 to 281 (TESSPSEASQHSMQSPQKTTLILPTQQVR) the composition is skewed to polar residues. Disordered stretches follow at residues 253–320 (TESS…EKPL) and 466–550 (PFSS…SSLN). Phosphoserine occurs at positions 256, 261, 267, 299, and 300. Thr-305 carries the phosphothreonine modification. Residues 476-495 (SSAEHDKNQSAKEDVTERQS) show a composition bias toward basic and acidic residues. Phosphoserine is present on Ser-499. A Phosphothreonine modification is found at Thr-503. The residue at position 511 (Ser-511) is a Phosphoserine. Lys-518 participates in a covalent cross-link: Glycyl lysine isopeptide (Lys-Gly) (interchain with G-Cter in SUMO2). A Phosphoserine modification is found at Ser-522. Residues 535–545 (PKEENLSEDSK) show a composition bias toward basic and acidic residues. A Glycyl lysine isopeptide (Lys-Gly) (interchain with G-Cter in SUMO2) cross-link involves residue Lys-536. Phosphoserine occurs at positions 570, 583, 590, and 594. Residues 575–584 (RSVPGTTSSP) show a composition bias toward polar residues. The disordered stretch occupies residues 575–594 (RSVPGTTSSPLVGDISPKSS). Residues Lys-599 and Lys-605 each participate in a glycyl lysine isopeptide (Lys-Gly) (interchain with G-Cter in SUMO2) cross-link. The 70-residue stretch at 631–700 (WSVDEVIQFM…IEKLKEGKYS (70 aa)) folds into the SAM domain.

It belongs to the SCM family. As to expression, highly expressed in placenta, thymus and testis. Detected at lower levels in brain, liver, skeletal muscle, pancreas and ovary.

The protein resides in the nucleus. In terms of biological role, putative Polycomb group (PcG) protein. PcG proteins act by forming multiprotein complexes, which are required to maintain the transcriptionally repressive state of homeotic genes throughout development. This chain is Sex comb on midleg-like protein 2 (SCML2), found in Homo sapiens (Human).